The primary structure comprises 402 residues: MAAGGGLSRSERKAAERVRRLREEQQRERLRQVSRILRKAAAERSAEEGRLLAESEDLVTELQGRSRRREGLKRRQEEVCDDPEELRRKVRELAGAVRSARHLVVYTGAGISTAASIPDYRGPNGVWTLLQKGRPVSAADLSEAEPTLTHMSITQLHKHKLVQHVVSQNCDGLHLRSGLPRTAISELHGNMYIEVCTSCIPNREYVRVFDVTERTALHRHLTGRTCHKCGTQLRDTIVHFGERGTLGQPLNWEAATEAASKADTILCLGSSLKVLKKYPRLWCMTKPPSRRPKLYIVNLQWTPKDDWAALKLHGKCDDVMRLLMDELGLEIPVYNRWQDPIFSLATPLRAGEEGSHSRKSLCRSREEPPPGDQSAPLASATPILGGWFGRGCAKRAKRKKAA.

Disordered stretches follow at residues Met-1 to Gln-25 and Val-59 to Glu-78. Basic and acidic residues predominate over residues Arg-9–Gln-25. One can recognise a Deacetylase sirtuin-type domain in the interval Pro-83–Glu-330. NAD(+)-binding positions include Gly-108–Trp-127 and Gln-168–Asp-171. Catalysis depends on His-188, which acts as the Proton acceptor. Cys-196, Cys-199, Cys-226, and Cys-229 together coordinate Zn(2+). Residues Gly-269–Ser-271, Asn-298–Gln-300, and Cys-316 contribute to the NAD(+) site. The disordered stretch occupies residues Ser-355 to Gly-385. Position 390 is an asymmetric dimethylarginine; alternate (Arg-390). Arg-390 bears the Omega-N-methylarginine; alternate mark.

The protein belongs to the sirtuin family. Class IV subfamily. In terms of assembly, interacts with UBTF and the RNA polymerase I complex. Interacts with components of the B-WICH complex, such as MYBBP1A, SMARCA5/SNF2H and BAZ1B/WSTF. Interacts with ELK4, leading to stabilization at target promoters for H3K18Ac deacetylation. Interacts with histone H2A and/or histone H2B. Interacts with DNMT1. Interacts with SIRT1. Requires Zn(2+) as cofactor. Phosphorylated during mitosis. Post-translationally, methylation at Arg-390 by PRMT6 inhibits the H3K18Ac histone deacetylase activity, promoting mitochondria biogenesis and maintaining mitochondria respiration. In terms of processing, ubiquitinated via 'Lys-63'-linked ubiquitin chains. Deubiquitinated by USP7, inhibiting the H3K18Ac histone deacetylase activity and regulating gluconeogenesis. Ubiquitinated by E3 ubiquitin-protein ligase complex containing FBXO7; leading to proteasomal degradation.

It localises to the nucleus. The protein resides in the nucleolus. The protein localises to the nucleoplasm. Its subcellular location is the chromosome. It is found in the cytoplasm. The enzyme catalyses N(6)-acetyl-L-lysyl-[protein] + NAD(+) + H2O = 2''-O-acetyl-ADP-D-ribose + nicotinamide + L-lysyl-[protein]. It catalyses the reaction N(6)-glutaryl-L-lysyl-[protein] + NAD(+) + H2O = 2''-O-glutaryl-ADP-D-ribose + nicotinamide + L-lysyl-[protein]. The catalysed reaction is N(6)-succinyl-L-lysyl-[protein] + NAD(+) + H2O = 2''-O-succinyl-ADP-D-ribose + nicotinamide + L-lysyl-[protein]. It carries out the reaction N(6)-propanoyl-L-lysyl-[protein] + NAD(+) + H2O = 3''-O-propanoyl-ADP-D-ribose + nicotinamide + L-lysyl-[protein]. The enzyme catalyses N(6)-decanoyl-L-lysyl-[protein] + NAD(+) + H2O = 2''-O-decanoyl-ADP-D-ribose + nicotinamide + L-lysyl-[protein]. With respect to regulation, NAD-dependent protein-lysine deacetylase and deacylase activities are activated by nucleic acids. Histone deacetylase activity is activated by DNA. Protein-lysine deacylase activity is activated by RNA. H3K18Ac histone deacetylase activity is inhibited by methylation at Arg-390. H3K18Ac histone deacetylase activity is inhibited by deubiquitination by USP7. In terms of biological role, NAD-dependent protein-lysine deacylase that can act both as a deacetylase or deacylase (desuccinylase, depropionylase, deglutarylase and dedecanoylase), depending on the context. Specifically mediates deacetylation of histone H3 at 'Lys-18' (H3K18Ac). In contrast to other histone deacetylases, displays strong preference for a specific histone mark, H3K18Ac, directly linked to control of gene expression. H3K18Ac is mainly present around the transcription start site of genes and has been linked to activation of nuclear hormone receptors; SIRT7 thereby acts as a transcription repressor. Moreover, H3K18 hypoacetylation has been reported as a marker of malignancy in various cancers and seems to maintain the transformed phenotype of cancer cells. Also able to mediate deacetylation of histone H3 at 'Lys-36' (H3K36Ac) in the context of nucleosomes. Also mediates deacetylation of non-histone proteins, such as ATM, CDK9, DDX21, DDB1, FBL, FKBP5/FKBP51, GABPB1, RAN, RRP9/U3-55K and POLR1E/PAF53. Enriched in nucleolus where it stimulates transcription activity of the RNA polymerase I complex. Acts by mediating the deacetylation of the RNA polymerase I subunit POLR1E/PAF53, thereby promoting the association of RNA polymerase I with the rDNA promoter region and coding region. In response to metabolic stress, SIRT7 is released from nucleoli leading to hyperacetylation of POLR1E/PAF53 and decreased RNA polymerase I transcription. Required to restore the transcription of ribosomal RNA (rRNA) at the exit from mitosis. Promotes pre-ribosomal RNA (pre-rRNA) cleavage at the 5'-terminal processing site by mediating deacetylation of RRP9/U3-55K, a core subunit of the U3 snoRNP complex. Mediates 'Lys-37' deacetylation of Ran, thereby regulating the nuclear export of NF-kappa-B subunit RELA/p65. Acts as a regulator of DNA damage repair by mediating deacetylation of ATM during the late stages of DNA damage response, promoting ATM dephosphorylation and deactivation. Suppresses the activity of the DCX (DDB1-CUL4-X-box) E3 ubiquitin-protein ligase complexes by mediating deacetylation of DDB1, which prevents the interaction between DDB1 and CUL4 (CUL4A or CUL4B). Activates RNA polymerase II transcription by mediating deacetylation of CDK9, thereby promoting 'Ser-2' phosphorylation of the C-terminal domain (CTD) of RNA polymerase II. Deacetylates FBL, promoting histone-glutamine methyltransferase activity of FBL. Acts as a regulator of mitochondrial function by catalyzing deacetylation of GABPB1. Regulates Akt/AKT1 activity by mediating deacetylation of FKBP5/FKBP51. Required to prevent R-loop-associated DNA damage and transcription-associated genomic instability by mediating deacetylation and subsequent activation of DDX21, thereby overcoming R-loop-mediated stalling of RNA polymerases. In addition to protein deacetylase activity, also acts as a protein-lysine deacylase. Acts as a protein depropionylase by mediating depropionylation of Osterix (SP7), thereby regulating bone formation by osteoblasts. Acts as a histone deglutarylase by mediating deglutarylation of histone H4 on 'Lys-91' (H4K91glu); a mark that destabilizes nucleosomes by promoting dissociation of the H2A-H2B dimers from nucleosomes. Acts as a histone desuccinylase: in response to DNA damage, recruited to DNA double-strand breaks (DSBs) and catalyzes desuccinylation of histone H3 on 'Lys-122' (H3K122succ), thereby promoting chromatin condensation and DSB repair. Also promotes DSB repair by promoting H3K18Ac deacetylation, regulating non-homologous end joining (NHEJ). Along with its role in DNA repair, required for chromosome synapsis during prophase I of female meiosis by catalyzing H3K18Ac deacetylation. Involved in transcriptional repression of LINE-1 retrotransposon via H3K18Ac deacetylation, and promotes their association with the nuclear lamina. Required to stabilize ribosomal DNA (rDNA) heterochromatin and prevent cellular senescence induced by rDNA instability. Acts as a negative regulator of SIRT1 by preventing autodeacetylation of SIRT1, restricting SIRT1 deacetylase activity. The sequence is that of NAD-dependent protein deacetylase sirtuin-7 from Rattus norvegicus (Rat).